Consider the following 221-residue polypeptide: Protein N-terminal glutamine amidohydrolase (221 aa).

Position 2 is an N-acetylserine (serine 2). Residues cysteine 23, histidine 79, and aspartate 97 contribute to the active site.

Belongs to the NTAQ1 family. Monomer.

The catalysed reaction is N-terminal L-glutaminyl-[protein] + H2O = N-terminal L-glutamyl-[protein] + NH4(+). Its function is as follows. Mediates the side-chain deamidation of N-terminal glutamine residues to glutamate, an important step in N-end rule pathway of protein degradation. Conversion of the resulting N-terminal glutamine to glutamate renders the protein susceptible to arginylation, polyubiquitination and degradation as specified by the N-end rule. Does not act on substrates with internal or C-terminal glutamine and does not act on non-glutamine residues in any position. Involved in immune response. Controls the expression of specific defense-response genes, activates the synthesis pathway for the phytoalexin camalexin, and influences basal resistance to the hemibiotroph pathogen Pseudomonas syringae pv tomato (Pst). In Arabidopsis thaliana (Mouse-ear cress), this protein is Protein N-terminal glutamine amidohydrolase.